Consider the following 137-residue polypeptide: Large ribosomal subunit protein uL16 (137 aa).

It belongs to the universal ribosomal protein uL16 family. In terms of assembly, part of the 50S ribosomal subunit.

Functionally, binds 23S rRNA and is also seen to make contacts with the A and possibly P site tRNAs. This Ruegeria sp. (strain TM1040) (Silicibacter sp.) protein is Large ribosomal subunit protein uL16.